An 804-amino-acid polypeptide reads, in one-letter code: Elongation factor G, mitochondrial (804 aa).

The N-terminal 63 residues, 1 to 63 (MSMHRVARAV…RHFFQSPIIR (63 aa)), are a transit peptide targeting the mitochondrion. The tr-type G domain maps to 99-385 (RRVRNIGIAA…AVCDYLPNPA (287 aa)). GTP-binding positions include 108–115 (AHIDSGKT), 183–187 (DTPGH), and 237–240 (NKMD).

The protein belongs to the TRAFAC class translation factor GTPase superfamily. Classic translation factor GTPase family. EF-G/EF-2 subfamily.

It localises to the mitochondrion. It participates in protein biosynthesis; polypeptide chain elongation. In terms of biological role, mitochondrial GTPase that catalyzes the GTP-dependent ribosomal translocation step during translation elongation. During this step, the ribosome changes from the pre-translocational (PRE) to the post-translocational (POST) state as the newly formed A-site-bound peptidyl-tRNA and P-site-bound deacylated tRNA move to the P and E sites, respectively. Catalyzes the coordinated movement of the two tRNA molecules, the mRNA and conformational changes in the ribosome. This is Elongation factor G, mitochondrial (mef1) from Sclerotinia sclerotiorum (strain ATCC 18683 / 1980 / Ss-1) (White mold).